A 2360-amino-acid chain; its full sequence is DNA (cytosine-5-)-methyltransferase DMT5 (2360 aa).

In terms of domain architecture, SAM-dependent MTase C5-type spans 48–507 (FTVGTMCSGT…LCILIAERQV (460 aa)). Residue Cys-146 is part of the active site. Residues 1258–1575 (AEVVNRARGG…CAIADLVNMH (318 aa)) enclose the Helicase ATP-binding domain. 1271–1278 (HDVGFGKT) contributes to the ATP binding site. The tract at residues 1451-1498 (SRRKDQKSKATARTQRAKKKSKKPRRTAAAAAESDHSAESDSDSAMDD) is disordered. Residues 1465 to 1476 (QRAKKKSKKPRR) are compositionally biased toward basic residues. The segment at 2018–2070 (CSVCGSQDNTEMKDLSLFITCGHLLCSGCVAAHEHQHGQAESTTGEVLCPVDS) adopts an RING-type; degenerate zinc-finger fold. The 166-residue stretch at 2102–2267 (KVMKILDVIR…RMPLDDLDYK (166 aa)) folds into the Helicase C-terminal domain.

This sequence in the N-terminal section; belongs to the class I-like SAM-binding methyltransferase superfamily. C5-methyltransferase family. In the C-terminal section; belongs to the SNF2/RAD54 helicase family.

It is found in the nucleus. Its subcellular location is the chromosome. The enzyme catalyses a 2'-deoxycytidine in DNA + S-adenosyl-L-methionine + ATP + H2O = a 5-methyl-2'-deoxycytidine in DNA + S-adenosyl-L-homocysteine + ADP + phosphate + 2 H(+). May play a role in cytosine methylation at palindromic 5'-CG-3' and 5'-C[ACT]G-3' sites in DNA. In Verticillium dahliae (strain VdLs.17 / ATCC MYA-4575 / FGSC 10137) (Verticillium wilt), this protein is DNA (cytosine-5-)-methyltransferase DMT5.